Here is a 205-residue protein sequence, read N- to C-terminus: MKILITGFEPFGGEVVNPSFEAVKHLPDSIEKAQIVKAAIHTVFRKSIEVLEELIVKEKPDIVICVGQAGGRAEITIERVAINIDDAKNPDNEGNTPKDEVIFEDGENAYFSNLPIKKMVEEIKNCKIPASISNSAGTYVCNHLMYGLLYLINKKYKNMKGGFIHVPYLPQQVLNKKNVPSMSLDNIVQALVCSIKAILKEYNDE.

Catalysis depends on residues Glu78, Cys141, and His165.

Belongs to the peptidase C15 family. Homotetramer.

It localises to the cytoplasm. The catalysed reaction is Release of an N-terminal pyroglutamyl group from a polypeptide, the second amino acid generally not being Pro.. In terms of biological role, removes 5-oxoproline from various penultimate amino acid residues except L-proline. In Thermosipho africanus (strain TCF52B), this protein is Pyrrolidone-carboxylate peptidase.